Here is an 89-residue protein sequence, read N- to C-terminus: Translation initiation factor IF-1, chloroplastic (89 aa).

One can recognise an S1-like domain in the interval 1 to 73 (MKEKEAKWVV…TKGRIIYRLP (73 aa)).

The protein belongs to the IF-1 family. Component of the 30S ribosomal translation pre-initiation complex which assembles on the 30S ribosome in the order IF-2 and IF-3, IF-1 and N-formylmethionyl-tRNA(fMet); mRNA recruitment can occur at any time during PIC assembly.

It localises to the plastid. Its subcellular location is the chloroplast. One of the essential components for the initiation of protein synthesis. Stabilizes the binding of IF-2 and IF-3 on the 30S subunit to which N-formylmethionyl-tRNA(fMet) subsequently binds. Helps modulate mRNA selection, yielding the 30S pre-initiation complex (PIC). Upon addition of the 50S ribosomal subunit IF-1, IF-2 and IF-3 are released leaving the mature 70S translation initiation complex. The polypeptide is Translation initiation factor IF-1, chloroplastic (Jasminum nudiflorum (Winter jasmine)).